The sequence spans 67 residues: ATP synthase F(0) complex subunit 8 (67 aa).

The helical transmembrane segment at 8-24 threads the bilayer; that stretch reads TWFINIVSMILTLFIVF. Lysine 54 bears the N6-acetyllysine; alternate mark. Residue lysine 54 is modified to N6-succinyllysine; alternate. The residue at position 57 (lysine 57) is an N6-acetyllysine.

It belongs to the ATPase protein 8 family. As to quaternary structure, component of the ATP synthase complex composed at least of ATP5F1A/subunit alpha, ATP5F1B/subunit beta, ATP5MC1/subunit c (homooctomer), MT-ATP6/subunit a, MT-ATP8/subunit 8, ATP5ME/subunit e, ATP5MF/subunit f, ATP5MG/subunit g, ATP5MK/subunit k, ATP5MJ/subunit j, ATP5F1C/subunit gamma, ATP5F1D/subunit delta, ATP5F1E/subunit epsilon, ATP5PF/subunit F6, ATP5PB/subunit b, ATP5PD/subunit d, ATP5PO/subunit OSCP. ATP synthase complex consists of a soluble F(1) head domain (subunits alpha(3) and beta(3)) - the catalytic core - and a membrane F(0) domain - the membrane proton channel (subunits c, a, 8, e, f, g, k and j). These two domains are linked by a central stalk (subunits gamma, delta, and epsilon) rotating inside the F1 region and a stationary peripheral stalk (subunits F6, b, d, and OSCP). Interacts with PRICKLE3.

The protein localises to the mitochondrion membrane. Its function is as follows. Subunit 8, of the mitochondrial membrane ATP synthase complex (F(1)F(0) ATP synthase or Complex V) that produces ATP from ADP in the presence of a proton gradient across the membrane which is generated by electron transport complexes of the respiratory chain. ATP synthase complex consist of a soluble F(1) head domain - the catalytic core - and a membrane F(1) domain - the membrane proton channel. These two domains are linked by a central stalk rotating inside the F(1) region and a stationary peripheral stalk. During catalysis, ATP synthesis in the catalytic domain of F(1) is coupled via a rotary mechanism of the central stalk subunits to proton translocation. In vivo, can only synthesize ATP although its ATP hydrolase activity can be activated artificially in vitro. Part of the complex F(0) domain. In Equus caballus (Horse), this protein is ATP synthase F(0) complex subunit 8.